Consider the following 123-residue polypeptide: Transmembrane protein 254 (123 aa).

The residue at position 2 (alanine 2) is an N-acetylalanine. The next 3 helical transmembrane spans lie at 15 to 35, 61 to 81, and 95 to 115; these read LFWFTVITLSFGYYTWVVFWP, LCNGYWLAWLIHVGESLYAIV, and LLWFLQTFFFGIASLTILIAY.

The protein localises to the membrane. The polypeptide is Transmembrane protein 254 (TMEM254) (Homo sapiens (Human)).